The following is a 91-amino-acid chain: Chorion class B protein M3A5 (91 aa).

Residues 1–51 form a central domain region; sequence VASENRYEGTVGVSGNLPFLGTADVAGEFPTAGIGEILYGCGNGAVGITRE. A right arm (Gly-rich tandem repeats) region spans residues 52 to 91; the sequence is GGLGYGAGYGGGYGLGYGGYGGGYGLGYGGYGGCGCGCGY.

This sequence belongs to the chorion protein family.

In terms of biological role, this protein is one of many from the eggshell of the silk moth. The polypeptide is Chorion class B protein M3A5 (Bombyx mori (Silk moth)).